Reading from the N-terminus, the 92-residue chain is Small ribosomal subunit protein uS19 (92 aa).

Belongs to the universal ribosomal protein uS19 family.

Its function is as follows. Protein S19 forms a complex with S13 that binds strongly to the 16S ribosomal RNA. The sequence is that of Small ribosomal subunit protein uS19 from Bifidobacterium adolescentis (strain ATCC 15703 / DSM 20083 / NCTC 11814 / E194a).